The chain runs to 122 residues: Crustacean hyperglycemic hormones 5 (122 aa).

An N-terminal signal peptide occupies residues methionine 1–alanine 26. 3 disulfides stabilise this stretch: cysteine 55/cysteine 91, cysteine 71/cysteine 87, and cysteine 74/cysteine 100. A Valine amide modification is found at valine 120.

Belongs to the arthropod CHH/MIH/GIH/VIH hormone family.

Its subcellular location is the secreted. Functionally, hormone found in the sinus gland of isopods and decapods which controls the blood sugar level. Has a secretagogue action over the amylase released from the midgut gland. May act as a stress hormone and may be involved in the control of molting and reproduction. The chain is Crustacean hyperglycemic hormones 5 (CHH5) from Penaeus monodon (Giant tiger prawn).